A 119-amino-acid chain; its full sequence is Ribosome-binding factor A (119 aa).

It belongs to the RbfA family. In terms of assembly, monomer. Binds 30S ribosomal subunits, but not 50S ribosomal subunits or 70S ribosomes.

The protein localises to the cytoplasm. Its function is as follows. One of several proteins that assist in the late maturation steps of the functional core of the 30S ribosomal subunit. Associates with free 30S ribosomal subunits (but not with 30S subunits that are part of 70S ribosomes or polysomes). Required for efficient processing of 16S rRNA. May interact with the 5'-terminal helix region of 16S rRNA. This is Ribosome-binding factor A from Limosilactobacillus reuteri (strain DSM 20016) (Lactobacillus reuteri).